The primary structure comprises 233 residues: Large ribosomal subunit protein uL1 (233 aa).

Belongs to the universal ribosomal protein uL1 family. In terms of assembly, part of the 50S ribosomal subunit.

Binds directly to 23S rRNA. The L1 stalk is quite mobile in the ribosome, and is involved in E site tRNA release. Functionally, protein L1 is also a translational repressor protein, it controls the translation of the L11 operon by binding to its mRNA. The polypeptide is Large ribosomal subunit protein uL1 (Shewanella loihica (strain ATCC BAA-1088 / PV-4)).